The following is a 421-amino-acid chain: METREIASQRRKNLYLGIELKKFLKYLGPAFIVSVAYVDPGNFATNISGGSLFDYHLIWVILWSNVIAIFLQIQSAKLGIATGYNLPEMCSIIFPRKWNWFLWITAELAAMATDLAEFLGGTMGLYLLFHIPMTYAAFLTGVVTFAIVYMEKYGQKVVEGIIFGLVAVISLAYAFELFIARPDWSKVLYHTFIPSIPNKDAMLIAVGILGATVMPHVIYLHSQLVQYRNKDGSLQAKKEHLKMEKIDILVAMNTAFIINAAMLIVSAAVFYKNGIVIESIEEAHKTLEPLLGVFSSWAFGIALLASGFSSSAVGTMAGQTIMKGFVGLNIPLNVRRLVTMVPAITIIALGIDPLKSLIVSQVVLSFELPMAIIPLLLITSNKKFMKEFADTPLERIMGVLVASFVMILNGLLLYLTLKGEV.

11 helical membrane-spanning segments follow: residues 27 to 47 (LGPA…ATNI), 51 to 71 (SLFD…AIFL), 100 to 120 (WFLW…EFLG), 128 to 148 (LFHI…FAIV), 160 to 180 (GIIF…LFIA), 201 to 221 (AMLI…IYLH), 248 to 268 (ILVA…VSAA), 289 to 309 (PLLG…SGFS), 337 to 357 (LVTM…LKSL), 358 to 378 (IVSQ…LLLI), and 396 to 416 (IMGV…LYLT).

Belongs to the NRAMP family.

The protein localises to the cell membrane. Its function is as follows. H(+)-stimulated, divalent metal cation uptake system. In Caldanaerobacter subterraneus subsp. tengcongensis (strain DSM 15242 / JCM 11007 / NBRC 100824 / MB4) (Thermoanaerobacter tengcongensis), this protein is Divalent metal cation transporter MntH.